Here is a 485-residue protein sequence, read N- to C-terminus: MNNLRVRFAPSPTGAIHIGNIRTALFNYLFSRSEGATFVLRIEDTDLERSSKEFEELIFKELEWLGIEWDEGPDKPGPYGPYRQSERLEIYHKFAQKLIEEKKAYRCYCTPEELEEDRRKAVERGDIPCYSGRCRYLTKEQEEAFIREGRKPVIRFIIPDDEVIEFEDMIKGKITIKSDTLGGDMVIVKSDGMPTYNFAVVIDDALMKITHVIRGEDHIYNTPKQILIYKALGFEIPKFAHAPLILGPDRTKLSKRHGNTYIGQYRELGYLPEAMFNFLSLLSWSPEDNVEIMSKEEIIKKFNFRRIHSANPVFDIEKLNWMNQQYIQKSSIERIVDLAIPHLRRAGYIDGIDDMVYNWLKDVISLYKDGLQYVAQITEKAKMFFVEEVEYSDETVKILNSPNSKIVLEVVKKVIEEADEITEEYVKDLLKKLQKETKVKGKEFFMPIRVAITGEDHGPELVKIIPLLGKDKVINRLKKAINLIK.

A 'HIGH' region motif is present at residues proline 10–asparagine 20. The short motif at lysine 252–arginine 256 is the 'KMSKS' region element. ATP is bound at residue lysine 255.

The protein belongs to the class-I aminoacyl-tRNA synthetase family. Glutamate--tRNA ligase type 1 subfamily. Monomer.

It is found in the cytoplasm. The catalysed reaction is tRNA(Glu) + L-glutamate + ATP = L-glutamyl-tRNA(Glu) + AMP + diphosphate. Its function is as follows. Catalyzes the attachment of glutamate to tRNA(Glu) in a two-step reaction: glutamate is first activated by ATP to form Glu-AMP and then transferred to the acceptor end of tRNA(Glu). The sequence is that of Glutamate--tRNA ligase 1 from Thermoanaerobacter pseudethanolicus (strain ATCC 33223 / 39E) (Clostridium thermohydrosulfuricum).